We begin with the raw amino-acid sequence, 110 residues long: Large ribosomal subunit protein uL22 (110 aa).

It belongs to the universal ribosomal protein uL22 family. As to quaternary structure, part of the 50S ribosomal subunit.

Its function is as follows. This protein binds specifically to 23S rRNA; its binding is stimulated by other ribosomal proteins, e.g. L4, L17, and L20. It is important during the early stages of 50S assembly. It makes multiple contacts with different domains of the 23S rRNA in the assembled 50S subunit and ribosome. Functionally, the globular domain of the protein is located near the polypeptide exit tunnel on the outside of the subunit, while an extended beta-hairpin is found that lines the wall of the exit tunnel in the center of the 70S ribosome. The polypeptide is Large ribosomal subunit protein uL22 (Actinobacillus pleuropneumoniae serotype 5b (strain L20)).